The primary structure comprises 414 residues: Serine hydroxymethyltransferase (414 aa).

(6S)-5,6,7,8-tetrahydrofolate-binding positions include Leu117 and 121–123 (GHL). Residue Lys226 is modified to N6-(pyridoxal phosphate)lysine.

The protein belongs to the SHMT family. Homodimer. It depends on pyridoxal 5'-phosphate as a cofactor.

The protein localises to the cytoplasm. The enzyme catalyses (6R)-5,10-methylene-5,6,7,8-tetrahydrofolate + glycine + H2O = (6S)-5,6,7,8-tetrahydrofolate + L-serine. The protein operates within one-carbon metabolism; tetrahydrofolate interconversion. It participates in amino-acid biosynthesis; glycine biosynthesis; glycine from L-serine: step 1/1. Functionally, catalyzes the reversible interconversion of serine and glycine with tetrahydrofolate (THF) serving as the one-carbon carrier. This reaction serves as the major source of one-carbon groups required for the biosynthesis of purines, thymidylate, methionine, and other important biomolecules. Also exhibits THF-independent aldolase activity toward beta-hydroxyamino acids, producing glycine and aldehydes, via a retro-aldol mechanism. This chain is Serine hydroxymethyltransferase, found in Dictyoglomus turgidum (strain DSM 6724 / Z-1310).